Consider the following 475-residue polypeptide: uncharacterized protein (475 aa).

Residues 42 to 292 are disordered; the sequence is NLQNSLTGKT…NTRKGQRHNN (251 aa). 2 stretches are compositionally biased toward basic and acidic residues: residues 59-72 and 119-134; these read EANH…KSED and IAEK…DDSQ. 2 stretches are compositionally biased toward polar residues: residues 150–159 and 220–242; these read ITPNFTHTPI and NNTF…TSED. Positions 243 to 263 are enriched in low complexity; the sequence is SSSQAPHHSSSSGHAPSQQGG. The segment covering 277-289 has biased composition (basic residues); that stretch reads FHHKGRNTRKGQR. The 90-residue stretch at 319-408 folds into the HTH La-type RNA-binding domain; the sequence is NPYLCDVQAF…MSIKVRRKET (90 aa). T408 is subject to Phosphothreonine. The residue at position 410 (S410) is a Phosphoserine.

It localises to the cytoplasm. This is an uncharacterized protein from Schizosaccharomyces pombe (strain 972 / ATCC 24843) (Fission yeast).